The sequence spans 488 residues: Ammonium transporter 1 member 1 (488 aa).

11 helical membrane-spanning segments follow: residues 47–69 (TYLL…LLAG), 90–109 (LFYY…NGFI), 129–148 (FLYQ…GSIA), 153–175 (FVAY…SHWF), 195–217 (VIDF…YGAL), 238–257 (HSAS…WYGF), 281–303 (AVGR…TLFG), 316–333 (VCNG…GCSV), 337–356 (WAAI…FNML), 368–387 (AAQL…GLFA), and 418–440 (HIIQ…FYIL).

This sequence belongs to the ammonia transporter channel (TC 1.A.11.2) family. As to expression, root hairs and leaves.

It is found in the membrane. In terms of biological role, ammonium transporter that may be involved in ammonium uptake from the soil. This chain is Ammonium transporter 1 member 1 (AMT1-1), found in Solanum lycopersicum (Tomato).